The primary structure comprises 63 residues: Large ribosomal subunit protein bL28 (63 aa).

Positions 11-20 (GNNSGASVSH) are enriched in polar residues. A disordered region spans residues 11–30 (GNNSGASVSHSNKKTKRKWK). Over residues 21–30 (SNKKTKRKWK) the composition is skewed to basic residues.

Belongs to the bacterial ribosomal protein bL28 family.

The polypeptide is Large ribosomal subunit protein bL28 (Natranaerobius thermophilus (strain ATCC BAA-1301 / DSM 18059 / JW/NM-WN-LF)).